Consider the following 109-residue polypeptide: Spermidine export protein MdtI (109 aa).

4 helical membrane passes run tryptophan 6–leucine 26, phenylalanine 36–valine 56, alanine 64–phenylalanine 84, and leucine 88–leucine 108.

The protein belongs to the drug/metabolite transporter (DMT) superfamily. Small multidrug resistance (SMR) (TC 2.A.7.1) family. MdtI subfamily. In terms of assembly, forms a complex with MdtJ.

It localises to the cell inner membrane. Functionally, catalyzes the excretion of spermidine. The polypeptide is Spermidine export protein MdtI (Citrobacter koseri (strain ATCC BAA-895 / CDC 4225-83 / SGSC4696)).